The following is a 363-amino-acid chain: Chorismate synthase (363 aa).

The interval 36–58 (SESDIQGDLDRRRPGQSKITTPR) is disordered. Arginine 47 lines the NADP(+) pocket. FMN is bound by residues 124 to 126 (RSS), glycine 286, 301 to 305 (KPTAT), and arginine 327.

This sequence belongs to the chorismate synthase family. As to quaternary structure, homotetramer. FMNH2 serves as cofactor.

The enzyme catalyses 5-O-(1-carboxyvinyl)-3-phosphoshikimate = chorismate + phosphate. The protein operates within metabolic intermediate biosynthesis; chorismate biosynthesis; chorismate from D-erythrose 4-phosphate and phosphoenolpyruvate: step 7/7. Functionally, catalyzes the anti-1,4-elimination of the C-3 phosphate and the C-6 proR hydrogen from 5-enolpyruvylshikimate-3-phosphate (EPSP) to yield chorismate, which is the branch point compound that serves as the starting substrate for the three terminal pathways of aromatic amino acid biosynthesis. This reaction introduces a second double bond into the aromatic ring system. This Crocosphaera subtropica (strain ATCC 51142 / BH68) (Cyanothece sp. (strain ATCC 51142)) protein is Chorismate synthase.